The primary structure comprises 57 residues: UPF0509 protein YciZ (57 aa).

Belongs to the UPF0509 family.

In Escherichia coli O127:H6 (strain E2348/69 / EPEC), this protein is UPF0509 protein YciZ.